A 194-amino-acid chain; its full sequence is dCTP deaminase (194 aa).

DCTP is bound by residues 110 to 115 (RSSLAR), Asp128, 136 to 138 (VLE), Tyr171, Lys178, and Gln182. The active-site Proton donor/acceptor is the Glu138. The tract at residues 172-194 (NKRKSAKYRDQQEAVASRISQDK) is disordered.

This sequence belongs to the dCTP deaminase family. As to quaternary structure, homotrimer.

It catalyses the reaction dCTP + H2O + H(+) = dUTP + NH4(+). It participates in pyrimidine metabolism; dUMP biosynthesis; dUMP from dCTP (dUTP route): step 1/2. Its function is as follows. Catalyzes the deamination of dCTP to dUTP. In Shewanella loihica (strain ATCC BAA-1088 / PV-4), this protein is dCTP deaminase.